The primary structure comprises 305 residues: tRNA pseudouridine synthase B (305 aa).

Catalysis depends on D41, which acts as the Nucleophile.

Belongs to the pseudouridine synthase TruB family. Type 1 subfamily.

It carries out the reaction uridine(55) in tRNA = pseudouridine(55) in tRNA. Its function is as follows. Responsible for synthesis of pseudouridine from uracil-55 in the psi GC loop of transfer RNAs. This is tRNA pseudouridine synthase B from Prochlorococcus marinus (strain MIT 9301).